A 776-amino-acid chain; its full sequence is MNPEEQIVTWLISLGVLESPKKTICDPEEFLKSSLKNGVVLCKLINRLMPGSVEKFCLDPQTEADCINNINDFLKGCATLQVEIFDPDDLYSGVNFSKVLSTLLAVNKATEDQLSERPCGRSSSLSAANTSQTNPQGAVSSTVSGLQRQSKTVEMTENGSHQLIVKARFNFKQTNEDELSVCKGDIIYVTRVEEGGWWEGTLNGRTGWFPSNYVREIKSSERPLSPKAVKGFETAPLTKNYYTVVLQNILDTEKEYAKELQSLLVTYLRPLQSNNNLSTVEVTSLLGNFEEVCTFQQTLCQALEECSKFPENQHKVGGCLLSLMPHFKSMYLAYCANHPSAVNVLTQHSDELEQFMENQGASSPGILILTTNLSKPFMRLEKYVTLLQELERHMEDTHPDHQDILKAIVAFKTLMGQCQDLRKRKQLELQILSEPIQAWEGEDIKNLGNVIFMSQVMVQYGACEEKEERYLMLFSNVLIMLSASPRMSGFIYQGKIPIAGTVVTRLDEIEGNDCTFEITGNTVERIVVHCNNNQDFQEWLEQLNRLIRGPASCSSLSKTSSSSCSAHSSFSSTGQPRGPLEPPQIIKPWSLSCLRPAPPLRPSAALGYKERMSYILKESSKSPKTMKKFLHKRKTERKPSEEEYVIRKSTAALEEDAQILKVIEAYCTSANFQQGHGSSTRKDSIPQVLLPEEEKLIIEETRSNGQTIMEEKSLVDTVYALKDEVRELKQENKRMKQCLEEELKSRRDLEKLVRRLLKQTDECIRGESSSKTSILP.

The 111-residue stretch at 1-111 (MNPEEQIVTW…TLLAVNKATE (111 aa)) folds into the Calponin-homology (CH) domain. Residues 115–151 (SERPCGRSSSLSAANTSQTNPQGAVSSTVSGLQRQSK) are disordered. Residues 121 to 151 (RSSSLSAANTSQTNPQGAVSSTVSGLQRQSK) are compositionally biased toward polar residues. Ser126 carries the phosphoserine modification. Position 133 is a phosphothreonine (Thr133). Residues Ser144 and Ser150 each carry the phosphoserine modification. The SH3 domain occupies 160–219 (SHQLIVKARFNFKQTNEDELSVCKGDIIYVTRVEEGGWWEGTLNGRTGWFPSNYVREIKS). Ser225 is modified (phosphoserine). The region spanning 241–421 (YYTVVLQNIL…KTLMGQCQDL (181 aa)) is the DH domain. One can recognise a PH domain in the interval 443 to 548 (DIKNLGNVIF…WLEQLNRLIR (106 aa)). The residue at position 488 (Ser488) is a Phosphoserine. Residues 561–572 (SSSCSAHSSFSS) are compositionally biased toward low complexity. The segment at 561 to 581 (SSSCSAHSSFSSTGQPRGPLE) is disordered. 2 positions are modified to phosphoserine: Ser640 and Ser684.

In terms of assembly, interacts with PAK kinases through the SH3 domain. Interacts with GIT1. Component of cytoplasmic complexes, which also contain PXN, GIT1 and PAK1. Interacts with PARVB. Interacts with BIN2. Identified in a complex with BIN2 and GIT2. Interacts with PARVG; the guanine nucleotide exchange factor activity of ARHGEF6 is essential for PARVG-induced enhancement of cell spreading. In terms of tissue distribution, ubiquitous.

It is found in the cell projection. It localises to the lamellipodium. In terms of biological role, acts as a RAC1 guanine nucleotide exchange factor (GEF). The polypeptide is Rho guanine nucleotide exchange factor 6 (ARHGEF6) (Homo sapiens (Human)).